Here is a 460-residue protein sequence, read N- to C-terminus: Bifunctional protein GlmU (460 aa).

Positions Met1–Lys229 are pyrophosphorylase. UDP-N-acetyl-alpha-D-glucosamine is bound by residues Leu9–Gly12, Lys23, Gln74, Gly79–Thr80, Tyr101–Asp103, Gly138, Glu154, Asn169, and Asn227. Asp103 is a binding site for Mg(2+). Asn227 lines the Mg(2+) pocket. Residues Val230–Gln250 form a linker region. The segment at Gly251–Asn460 is N-acetyltransferase. UDP-N-acetyl-alpha-D-glucosamine contacts are provided by Arg333 and Lys351. His363 serves as the catalytic Proton acceptor. Positions 366 and 377 each coordinate UDP-N-acetyl-alpha-D-glucosamine. Residues Ala380, Asn386–Tyr387, Ser405, Ala423, and Arg440 each bind acetyl-CoA.

The protein in the N-terminal section; belongs to the N-acetylglucosamine-1-phosphate uridyltransferase family. In the C-terminal section; belongs to the transferase hexapeptide repeat family. As to quaternary structure, homotrimer. Mg(2+) serves as cofactor.

The protein resides in the cytoplasm. The enzyme catalyses alpha-D-glucosamine 1-phosphate + acetyl-CoA = N-acetyl-alpha-D-glucosamine 1-phosphate + CoA + H(+). It catalyses the reaction N-acetyl-alpha-D-glucosamine 1-phosphate + UTP + H(+) = UDP-N-acetyl-alpha-D-glucosamine + diphosphate. It functions in the pathway nucleotide-sugar biosynthesis; UDP-N-acetyl-alpha-D-glucosamine biosynthesis; N-acetyl-alpha-D-glucosamine 1-phosphate from alpha-D-glucosamine 6-phosphate (route II): step 2/2. Its pathway is nucleotide-sugar biosynthesis; UDP-N-acetyl-alpha-D-glucosamine biosynthesis; UDP-N-acetyl-alpha-D-glucosamine from N-acetyl-alpha-D-glucosamine 1-phosphate: step 1/1. The protein operates within bacterial outer membrane biogenesis; LPS lipid A biosynthesis. Its function is as follows. Catalyzes the last two sequential reactions in the de novo biosynthetic pathway for UDP-N-acetylglucosamine (UDP-GlcNAc). The C-terminal domain catalyzes the transfer of acetyl group from acetyl coenzyme A to glucosamine-1-phosphate (GlcN-1-P) to produce N-acetylglucosamine-1-phosphate (GlcNAc-1-P), which is converted into UDP-GlcNAc by the transfer of uridine 5-monophosphate (from uridine 5-triphosphate), a reaction catalyzed by the N-terminal domain. The protein is Bifunctional protein GlmU of Nitrosospira multiformis (strain ATCC 25196 / NCIMB 11849 / C 71).